Consider the following 323-residue polypeptide: Glutamyl-Q tRNA(Asp) synthetase (323 aa).

L-glutamate contacts are provided by residues 5-9 (RFAPT) and Glu41. Positions 8 to 18 (PTPSGALHLGN) match the 'HIGH' region motif. Positions 105, 107, 129, and 133 each coordinate Zn(2+). Positions 193 and 211 each coordinate L-glutamate. Residues 249–253 (RLAKR) carry the 'KMSKS' region motif. Residue Lys252 participates in ATP binding.

This sequence belongs to the class-I aminoacyl-tRNA synthetase family. GluQ subfamily. Zn(2+) is required as a cofactor.

Functionally, catalyzes the tRNA-independent activation of glutamate in presence of ATP and the subsequent transfer of glutamate onto a tRNA(Asp). Glutamate is transferred on the 2-amino-5-(4,5-dihydroxy-2-cyclopenten-1-yl) moiety of the queuosine in the wobble position of the QUC anticodon. The sequence is that of Glutamyl-Q tRNA(Asp) synthetase from Symbiobacterium thermophilum (strain DSM 24528 / JCM 14929 / IAM 14863 / T).